A 190-amino-acid polypeptide reads, in one-letter code: Peptidyl-tRNA hydrolase (190 aa).

Tyr-18 is a tRNA binding site. His-23 (proton acceptor) is an active-site residue. Residues Phe-69, Asn-71, and Asn-117 each coordinate tRNA.

This sequence belongs to the PTH family. As to quaternary structure, monomer.

The protein resides in the cytoplasm. It catalyses the reaction an N-acyl-L-alpha-aminoacyl-tRNA + H2O = an N-acyl-L-amino acid + a tRNA + H(+). Hydrolyzes ribosome-free peptidyl-tRNAs (with 1 or more amino acids incorporated), which drop off the ribosome during protein synthesis, or as a result of ribosome stalling. Functionally, catalyzes the release of premature peptidyl moieties from peptidyl-tRNA molecules trapped in stalled 50S ribosomal subunits, and thus maintains levels of free tRNAs and 50S ribosomes. The protein is Peptidyl-tRNA hydrolase of Rhodococcus jostii (strain RHA1).